Reading from the N-terminus, the 297-residue chain is Tyrosine recombinase XerC (297 aa).

The Core-binding (CB) domain occupies 1–83 (MAILDEFDEH…AVKAFTAWAK (83 aa)). In terms of domain architecture, Tyr recombinase spans 104–291 (TLPAVLRQDQ…AVSRLRVVHD (188 aa)). Residues Arg-148, Lys-172, His-243, Arg-246, and His-269 contribute to the active site. The active-site O-(3'-phospho-DNA)-tyrosine intermediate is Tyr-278.

Belongs to the 'phage' integrase family. XerC subfamily. Forms a cyclic heterotetrameric complex composed of two molecules of XerC and two molecules of XerD.

It localises to the cytoplasm. In terms of biological role, site-specific tyrosine recombinase, which acts by catalyzing the cutting and rejoining of the recombining DNA molecules. The XerC-XerD complex is essential to convert dimers of the bacterial chromosome into monomers to permit their segregation at cell division. It also contributes to the segregational stability of plasmids. In Mycobacterium leprae (strain TN), this protein is Tyrosine recombinase XerC.